Consider the following 921-residue polypeptide: uncharacterized protein (921 aa).

The interval Met-334–Phe-628 is kinase-like. The segment covering Gly-401 to Gly-494 has biased composition (low complexity). Disordered regions lie at residues Gly-401–Asn-499 and Asn-664–Ser-711.

This is an uncharacterized protein from Dictyostelium discoideum (Social amoeba).